The primary structure comprises 136 residues: Glutaredoxin-C8 (136 aa).

Positions 33 to 135 (SSFVKSTVKA…KLLNIDVKED (103 aa)) constitute a Glutaredoxin domain. A disulfide bridge connects residues cysteine 53 and cysteine 56.

It belongs to the glutaredoxin family. CPYC subfamily.

It is found in the cytoplasm. Its function is as follows. Has a glutathione-disulfide oxidoreductase activity in the presence of NADPH and glutathione reductase. Reduces low molecular weight disulfides and proteins. In Oryza sativa subsp. japonica (Rice), this protein is Glutaredoxin-C8 (GRXC8).